We begin with the raw amino-acid sequence, 172 residues long: C-phycocyanin subunit beta (172 aa).

Residue Asn-72 is modified to N4-methylasparagine. 2 residues coordinate (2R,3E)-phycocyanobilin: Cys-82 and Cys-153.

The protein belongs to the phycobiliprotein family. As to quaternary structure, heterodimer of an alpha and a beta subunit, which further assembles into trimers and the trimers into hexamers. Post-translationally, contains two covalently linked bilin chromophores. The chromophore on position 82 is added by the phycocyanobilin lyase CpcUS, while the chromophore on position 153 is added by the phycocyanobilin lyase CpcT.

It localises to the cellular thylakoid membrane. Its function is as follows. Light-harvesting photosynthetic bile pigment-protein from the phycobiliprotein complex (phycobilisome, PBS). Phycocyanin is the major phycobiliprotein in the PBS rod. In Picosynechococcus sp. (strain ATCC 27264 / PCC 7002 / PR-6) (Agmenellum quadruplicatum), this protein is C-phycocyanin subunit beta (cpcB).